The sequence spans 159 residues: Deoxyuridine 5'-triphosphate nucleotidohydrolase (159 aa).

The dUMP site is built by serine 79, glycine 92, aspartate 95, tyrosine 98, lysine 103, arginine 148, phenylalanine 153, and glycine 154.

The protein belongs to the dUTPase family. In terms of assembly, homotrimer. Requires Mg(2+) as cofactor.

It carries out the reaction dUTP + H2O = dUMP + diphosphate + H(+). It participates in pyrimidine metabolism; dUMP biosynthesis; dUMP from dCTP (dUTP route): step 2/2. Functionally, involved in nucleotide metabolism via production of dUMP, the immediate precursor of thymidine nucleotides, and decreases the intracellular concentration of dUTP so that uracil cannot be incorporated into DNA. The chain is Deoxyuridine 5'-triphosphate nucleotidohydrolase (DUT1) from Candida albicans (strain SC5314 / ATCC MYA-2876) (Yeast).